Here is a 430-residue protein sequence, read N- to C-terminus: MGKFAVVLGSQWGDEGKGKVVDLLTENAAAVVRFQGGHNAGHTLVIDGKKTVLHLIPSGILREGVECMIGNGVVLSPEALMKEMAQLEAEGVPVRDRLRLSESCQLILPYHVSLDLAREQARGKAAIGTTGRGIGPAYEDKVSRRGLRLGDLFHRERFAAKLGEVLDYHNFVLQHYFKSEAVDFQQVLDQSLALAETLQPLVMDVPERLRELRAQGANVMFEGAQGTLLDIDHGTYPFVTSSNTTAGGACTGSGVGPLDLDYVLGITKAYTTRVGAGPFPTELFDAMGEHLARRGHEFGSTTGRARRCGWFDAVALRRAVAINSISGLCVTKLDVLDGLETLQLCVGYRCGDAEFSVPPAGADAFATCEPIYEEMPGWQESTLGVTRREDLPVNALRYLERIQEIIGVPVDMISTGPDRDQTIVLRHPFE.

Residues 13 to 19 (GDEGKGK) and 41 to 43 (GHT) contribute to the GTP site. Asp14 functions as the Proton acceptor in the catalytic mechanism. Residues Asp14 and Gly41 each contribute to the Mg(2+) site. Residues 14–17 (DEGK), 39–42 (NAGH), Thr130, Arg144, Gln225, Thr240, and Arg304 each bind IMP. His42 (proton donor) is an active-site residue. 300-306 (STTGRAR) lines the substrate pocket. Residues Arg306, 332 to 334 (KLD), and 414 to 416 (STG) contribute to the GTP site.

It belongs to the adenylosuccinate synthetase family. As to quaternary structure, homodimer. The cofactor is Mg(2+).

It localises to the cytoplasm. It catalyses the reaction IMP + L-aspartate + GTP = N(6)-(1,2-dicarboxyethyl)-AMP + GDP + phosphate + 2 H(+). It functions in the pathway purine metabolism; AMP biosynthesis via de novo pathway; AMP from IMP: step 1/2. Functionally, plays an important role in the de novo pathway of purine nucleotide biosynthesis. Catalyzes the first committed step in the biosynthesis of AMP from IMP. The sequence is that of Adenylosuccinate synthetase from Thioalkalivibrio sulfidiphilus (strain HL-EbGR7).